The following is a 409-amino-acid chain: AT-rich interactive domain-containing protein 3C (409 aa).

Residues 1 to 14 (MEALQRQQAARLAQ) are compositionally biased toward low complexity. The interval 1-91 (MEALQRQQAA…SPSSQSPGIQ (91 aa)) is disordered. The span at 19–30 (LAPPRLPLPQPP) shows a compositional bias: pro residues. Residues 49-70 (AEEEEGAEDEEGETPLAEEETA) show a composition bias toward acidic residues. An ARID domain is found at 110 to 202 (DPKRKEFLDD…YLYPYECETR (93 aa)). Disordered stretches follow at residues 233–274 (NLAG…PAHA), 306–333 (TREKLAPEEPPEKRAVLMGPVDSPRLGA), and 385–409 (PVPASLGPTNPPPLPSTGPPSSTLP). A compositionally biased stretch (low complexity) spans 235 to 257 (AGPTPRGAPGPASSHGPAPTATP). The 86-residue stretch at 301 to 386 (LASEATREKL…GILFARRQPV (86 aa)) folds into the REKLES domain. Residues 306 to 320 (TREKLAPEEPPEKRA) show a composition bias toward basic and acidic residues. A compositionally biased stretch (pro residues) spans 393 to 402 (TNPPPLPSTG).

In terms of assembly, interacts (via REKLES DOMAIN) with NPM1; the interaction mediates ARID3C nuclear shuttling.

The protein localises to the nucleus. Functionally, transcription factor involved in monocyte-to-macrophage differentiation. Forms a complex with NPM1 to translocate to the nucleus, acting as a transcription factor that promotes the expression of the genes involved in macrophage differentiation, such as STAT3, STAT1 and JUNB. The sequence is that of AT-rich interactive domain-containing protein 3C (Arid3c) from Mus musculus (Mouse).